The primary structure comprises 290 residues: ATP synthase gamma chain (290 aa).

It belongs to the ATPase gamma chain family. In terms of assembly, F-type ATPases have 2 components, CF(1) - the catalytic core - and CF(0) - the membrane proton channel. CF(1) has five subunits: alpha(3), beta(3), gamma(1), delta(1), epsilon(1). CF(0) has three main subunits: a, b and c.

It is found in the cell inner membrane. Functionally, produces ATP from ADP in the presence of a proton gradient across the membrane. The gamma chain is believed to be important in regulating ATPase activity and the flow of protons through the CF(0) complex. This Bacteroides fragilis (strain YCH46) protein is ATP synthase gamma chain.